A 232-amino-acid chain; its full sequence is Orotate phosphoribosyltransferase (232 aa).

5-phospho-alpha-D-ribose 1-diphosphate is bound by residues Arg107, Lys108, Lys111, His113, and 133–141; that span reads EDLTTAGGS. Thr137 is an orotate binding site.

It belongs to the purine/pyrimidine phosphoribosyltransferase family. PyrE subfamily. Homodimer. Requires Mg(2+) as cofactor.

It catalyses the reaction orotidine 5'-phosphate + diphosphate = orotate + 5-phospho-alpha-D-ribose 1-diphosphate. Its pathway is pyrimidine metabolism; UMP biosynthesis via de novo pathway; UMP from orotate: step 1/2. Functionally, catalyzes the transfer of a ribosyl phosphate group from 5-phosphoribose 1-diphosphate to orotate, leading to the formation of orotidine monophosphate (OMP). The polypeptide is Orotate phosphoribosyltransferase (Sinorhizobium fredii (strain NBRC 101917 / NGR234)).